We begin with the raw amino-acid sequence, 198 residues long: Ciliary neurotrophic factor (198 aa).

Belongs to the CNTF family. Nervous system.

The protein localises to the cytoplasm. CNTF is a survival factor for various neuronal cell types. Seems to prevent the degeneration of motor axons after axotomy. The chain is Ciliary neurotrophic factor (Cntf) from Mus musculus (Mouse).